The chain runs to 111 residues: Putative single-stranded DNA-binding protein ycf41 (111 aa).

Residues 1–98 enclose the SSB domain; that stretch reads MNKCNLLVQI…FSTSRIFKYK (98 aa).

The protein resides in the plastid. It is found in the chloroplast. The sequence is that of Putative single-stranded DNA-binding protein ycf41 (ycf41) from Porphyra purpurea (Red seaweed).